Reading from the N-terminus, the 225-residue chain is PKHD-type hydroxylase YbiX (225 aa).

Residues 78-177 (TLSTPLFNRY…RVASFMWIQS (100 aa)) form the Fe2OG dioxygenase domain. His-96, Asp-98, and His-158 together coordinate Fe cation. Arg-168 is a 2-oxoglutarate binding site.

The cofactor is Fe(2+). Requires L-ascorbate as cofactor.

The sequence is that of PKHD-type hydroxylase YbiX from Escherichia coli O6:K15:H31 (strain 536 / UPEC).